The chain runs to 205 residues: uncharacterized protein (205 aa).

Polar residues predominate over residues 1–25 (MSNNNNEAQQPVESTNVESQQNVVQ). A disordered region spans residues 1-205 (MSNNNNEAQQ…TSDPAQQVEA (205 aa)). Positions 32 to 79 (NENNDNNNNNNNNNNNNNNNNNNNNNNNNSNNNNNSSNNENNENNENN) are enriched in low complexity. Over residues 80-122 (SCEKSEQEKPKEPEEPVQEEKSKEPCDQQKVKENEPAEEKETE) the composition is skewed to basic and acidic residues. Composition is skewed to low complexity over residues 123-132 (PAAPVEPENP) and 146-162 (QHQQ…NGES). Over residues 170–185 (SENKKRSIDEAGDIKD) the composition is skewed to basic and acidic residues. Polar residues predominate over residues 194 to 205 (VETSDPAQQVEA).

This is an uncharacterized protein from Dictyostelium discoideum (Social amoeba).